Here is an 88-residue protein sequence, read N- to C-terminus: Small ribosomal subunit protein bS20 (88 aa).

The segment at 1 to 20 (MANTAQARKRARQAVVQNAH) is disordered.

It belongs to the bacterial ribosomal protein bS20 family.

Functionally, binds directly to 16S ribosomal RNA. This Ralstonia nicotianae (strain ATCC BAA-1114 / GMI1000) (Ralstonia solanacearum) protein is Small ribosomal subunit protein bS20.